The sequence spans 367 residues: DNA replication and repair protein RecF (367 aa).

30-37 contacts ATP; it reads GANGSGKT.

It belongs to the RecF family.

Its subcellular location is the cytoplasm. In terms of biological role, the RecF protein is involved in DNA metabolism; it is required for DNA replication and normal SOS inducibility. RecF binds preferentially to single-stranded, linear DNA. It also seems to bind ATP. This Pseudomonas putida (strain GB-1) protein is DNA replication and repair protein RecF.